The following is a 455-amino-acid chain: Chromosomal replication initiator protein DnaA (455 aa).

Residues 1–73 are domain I, interacts with DnaA modulators; the sequence is MTISPQYIWN…LEEVETIVGY (73 aa). Positions 73 to 114 are domain II; it reads YPIAVKLTTSQEQNLRIVDKNKDNLSSTKLQNKRQQESPKLN. A domain III, AAA+ region region spans residues 115-331; the sequence is QLNPRYNFSR…GALIRAVTYI (217 aa). ATP contacts are provided by glycine 159, glycine 161, lysine 162, and threonine 163. A domain IV, binds dsDNA region spans residues 332-455; it reads SISGLSMTVE…RINIASRNQN (124 aa).

Belongs to the DnaA family. Oligomerizes as a right-handed, spiral filament on DNA at oriC.

The protein resides in the cytoplasm. Functionally, plays an essential role in the initiation and regulation of chromosomal replication. ATP-DnaA binds to the origin of replication (oriC) to initiate formation of the DNA replication initiation complex once per cell cycle. Binds the DnaA box (a 9 base pair repeat at the origin) and separates the double-stranded (ds)DNA. Forms a right-handed helical filament on oriC DNA; dsDNA binds to the exterior of the filament while single-stranded (ss)DNA is stabiized in the filament's interior. The ATP-DnaA-oriC complex binds and stabilizes one strand of the AT-rich DNA unwinding element (DUE), permitting loading of DNA polymerase. After initiation quickly degrades to an ADP-DnaA complex that is not apt for DNA replication. Binds acidic phospholipids. In Crocosphaera subtropica (strain ATCC 51142 / BH68) (Cyanothece sp. (strain ATCC 51142)), this protein is Chromosomal replication initiator protein DnaA.